The chain runs to 203 residues: Orotate phosphoribosyltransferase (203 aa).

Residues R94, K98, H100, and 120-128 (EDLISTGGS) contribute to the 5-phospho-alpha-D-ribose 1-diphosphate site. S124 is an orotate binding site.

Belongs to the purine/pyrimidine phosphoribosyltransferase family. PyrE subfamily. In terms of assembly, homodimer. Mg(2+) is required as a cofactor.

It catalyses the reaction orotidine 5'-phosphate + diphosphate = orotate + 5-phospho-alpha-D-ribose 1-diphosphate. Its pathway is pyrimidine metabolism; UMP biosynthesis via de novo pathway; UMP from orotate: step 1/2. Catalyzes the transfer of a ribosyl phosphate group from 5-phosphoribose 1-diphosphate to orotate, leading to the formation of orotidine monophosphate (OMP). This is Orotate phosphoribosyltransferase from Staphylococcus aureus (strain Mu50 / ATCC 700699).